The chain runs to 262 residues: Oxidoreductase AgnL4 (262 aa).

This sequence belongs to the avfA family.

It participates in secondary metabolite biosynthesis. Functionally, oxidoreductase; part of the gene cluster that mediates the biosynthesis of agnestins, dihydroxy-xanthone metabolites. The pathway begins with the assembly and cyclization of atrochrysone thioester by the non-reducing polyketide synthase Agnpks1. The atrochrysone carboxyl ACP thioesterase AgnL7 then breaks the thioester bond and releases the atrochrysone carboxylic acid as the first enzyme-free intermediate. The decarboxylase AgnL1 then catalyzes the concerted decarboxylation-elimination required to convert atochrysone carboxylic acid into emodin anthrone, which is further oxidized to emodin by the anthrone oxygenase AgnL2. Emodin then undergoes reduction catalyzed by the oxidoreductase AgnL4 to yield the dihydroquinone tautomer which is the substrate for reduction by the short chain dehydrogenase AgnL6 reduction to produce hydroxyketone, followed by AgnL8 dehydration and likely spontaneous autoxidation to chrysophanol. Baeyer-Villiger oxidation by the oxidase AgnL3 leads to monodictyphenone via cleavage of the C-10/C-10a bond of chrysophanol. Alternative cleavage at the C-4a/C-10 bond of chrysophanol also leads to the formation some cephalone F. Further conversion to agnestins A and B, requires reduction to dihydro-monodictyphenone, oxidation to agnestin C probably via an epoxide, and rearrangement to either agnestin A or agnestin B directly, although agnestin A or agnestin B can also interconvert. Within the cluster, AgnR1 is the only unassigned oxidoreductase present which could be involved in this conversion. However, AgnR1 seems not to be involved in this step, and thus genes involved in the proposed oxidation/reduction may be located elsewhere on the genome. Further agnestin A derivatives are probably formed by spontaneous decarboxylations, dehydrations and methanolysis reactions. In Paecilomyces divaricatus (Penicillium divaricatum), this protein is Oxidoreductase AgnL4.